A 581-amino-acid chain; its full sequence is Polypeptide N-acetylgalactosaminyltransferase 12 (581 aa).

At 1-19 (MWGRTARRRCPRELRRGRE) the chain is on the cytoplasmic side. Residues 20–37 (ALLVLLALLALAGLGSVL) traverse the membrane as a helical; Signal-anchor for type II membrane protein segment. Residues 38–581 (RAQRGAGAGA…QKWFFKERML (544 aa)) lie on the Lumenal side of the membrane. The segment at 43–67 (AGAGAAEPGPPRTPRPGRREPVMPR) is disordered. 5 disulfides stabilise this stretch: Cys-125-Cys-358, Cys-349-Cys-422, Cys-458-Cys-479, Cys-506-Cys-521, and Cys-547-Cys-566. Positions 135 to 244 (LPRTSVIIAF…EGWLEPLLQR (110 aa)) are catalytic subdomain A. Substrate-binding residues include Asp-176 and Arg-205. Positions 228 and 230 each coordinate Mn(2+). Residues 304-366 (VIRSPTMAGG…PCSHVGHVFP (63 aa)) form a catalytic subdomain B region. Substrate is bound at residue Trp-335. A Mn(2+)-binding site is contributed by His-363. Tyr-371 contacts substrate. The Ricin B-type lectin domain occupies 445-577 (FFGMLQNKGL…NSDHQKWFFK (133 aa)).

It belongs to the glycosyltransferase 2 family. GalNAc-T subfamily. It depends on Mn(2+) as a cofactor. In terms of tissue distribution, widely expressed at different levels of expression. Highly expressed in digestive organs such as small intestine, stomach, pancreas and colon. Expressed at intermediate level in testis, thyroid gland and spleen. Weakly expressed in whole brain, cerebral cortex, cerebellum, fetal brain, bone marrow, thymus, leukocytes, heart, skeletal muscle, liver, lung, esophagus, kidney, adrenal gland, mammary gland, uterus, placenta, ovary and prostate.

The protein localises to the golgi apparatus membrane. It catalyses the reaction L-seryl-[protein] + UDP-N-acetyl-alpha-D-galactosamine = a 3-O-[N-acetyl-alpha-D-galactosaminyl]-L-seryl-[protein] + UDP + H(+). It carries out the reaction L-threonyl-[protein] + UDP-N-acetyl-alpha-D-galactosamine = a 3-O-[N-acetyl-alpha-D-galactosaminyl]-L-threonyl-[protein] + UDP + H(+). It functions in the pathway protein modification; protein glycosylation. In terms of biological role, catalyzes the initial reaction in O-linked oligosaccharide biosynthesis, the transfer of an N-acetyl-D-galactosamine residue to a serine or threonine residue on the protein receptor. Has activity toward non-glycosylated peptides such as Muc5AC, Muc1a and EA2, and no detectable activity with Muc2 and Muc7. Displays enzymatic activity toward the Gal-NAc-Muc5AC glycopeptide, but no detectable activity to mono-GalNAc-glycosylated Muc1a, Muc2, Muc7 and EA2. May play an important role in the initial step of mucin-type oligosaccharide biosynthesis in digestive organs. In Homo sapiens (Human), this protein is Polypeptide N-acetylgalactosaminyltransferase 12 (GALNT12).